A 180-amino-acid chain; its full sequence is Calcium-binding protein E (180 aa).

4 EF-hand domains span residues 3-38 (KVEA…NSNI), 40-76 (DPLA…KKIK), 85-120 (ALRS…DPDF), and 139-174 (RAKS…HPEF). Residues Asp16, Asp18, Asp20, Asn22, and Glu27 each coordinate Ca(2+). 9 residues coordinate Ca(2+): Asp98, Asp100, Asp102, Glu109, Asp152, Asp154, Asn156, Lys158, and Glu163.

This chain is Calcium-binding protein E (cbpE), found in Dictyostelium discoideum (Social amoeba).